The chain runs to 173 residues: Alpha-crystallin A chain (173 aa).

Met-1 bears the N-acetylmethionine mark. Residues 1-63 (MDVTIQHPWF…RTVLDSGISE (63 aa)) form a required for complex formation with BFSP1 and BFSP2 region. Deamidated glutamine; partial is present on Gln-6. Phosphoserine is present on Ser-45. Position 50 is a deamidated glutamine; partial (Gln-50). A sHSP domain is found at 52 to 162 (LFRTVLDSGI…GHSERAIPVS (111 aa)). The residue at position 70 (Lys-70) is an N6-acetyllysine. Gln-90 is modified (deamidated glutamine; partial). Lys-99 is modified (N6-acetyllysine). His-100 contributes to the Zn(2+) binding site. Position 101 is a deamidated asparagine; partial (Asn-101). Residues Glu-102 and His-107 each contribute to the Zn(2+) site. Ser-122 bears the Phosphoserine mark. Asn-123 is modified (deamidated asparagine; partial). The tract at residues 145–173 (KVQSGLDAGHSERAIPVSREEKPSSAPSS) is disordered. Residue Gln-147 is modified to Deamidated glutamine; partial. Basic and acidic residues predominate over residues 153 to 167 (GHSERAIPVSREEKP). Position 154 (His-154) interacts with Zn(2+). An O-linked (GlcNAc) serine glycan is attached at Ser-162.

The protein belongs to the small heat shock protein (HSP20) family. In terms of assembly, heteromer composed of three CRYAA and one CRYAB subunits. Inter-subunit bridging via zinc ions enhances stability, which is crucial as there is no protein turn over in the lens. Can also form homodimers and homotetramers (dimers of dimers) which serve as the building blocks of homooligomers. Within homooligomers, the zinc-binding motif is created from residues of 3 different molecules. His-100 and Glu-102 from one molecule are ligands of the zinc ion, and His-107 and His-154 residues from additional molecules complete the site with tetrahedral coordination geometry. Part of a complex required for lens intermediate filament formation composed of BFSP1, BFSP2 and CRYAA. Post-translationally, acetylation at Lys-70 may increase chaperone activity. Undergoes age-dependent proteolytical cleavage at the C-terminus.

It localises to the cytoplasm. Its subcellular location is the nucleus. Functionally, contributes to the transparency and refractive index of the lens. Acts as a chaperone, preventing aggregation of various proteins under a wide range of stress conditions. Required for the correct formation of lens intermediate filaments as part of a complex composed of BFSP1, BFSP2 and CRYAA. This Oryctolagus cuniculus (Rabbit) protein is Alpha-crystallin A chain (CRYAA).